We begin with the raw amino-acid sequence, 291 residues long: Phosphatidylglycerol--prolipoprotein diacylglyceryl transferase (291 aa).

The next 7 helical transmembrane spans lie at 21 to 41, 60 to 80, 96 to 116, 130 to 150, 198 to 218, 225 to 245, and 260 to 280; these read VSLH…MWLA, LLYA…VLFY, WDGG…MIIF, FIAP…FING, SQLY…NLFI, GSVS…VEFF, and ISMG…MMVW. R143 is a binding site for a 1,2-diacyl-sn-glycero-3-phospho-(1'-sn-glycerol).

This sequence belongs to the Lgt family.

The protein localises to the cell inner membrane. It carries out the reaction L-cysteinyl-[prolipoprotein] + a 1,2-diacyl-sn-glycero-3-phospho-(1'-sn-glycerol) = an S-1,2-diacyl-sn-glyceryl-L-cysteinyl-[prolipoprotein] + sn-glycerol 1-phosphate + H(+). It functions in the pathway protein modification; lipoprotein biosynthesis (diacylglyceryl transfer). Functionally, catalyzes the transfer of the diacylglyceryl group from phosphatidylglycerol to the sulfhydryl group of the N-terminal cysteine of a prolipoprotein, the first step in the formation of mature lipoproteins. In Klebsiella pneumoniae (strain 342), this protein is Phosphatidylglycerol--prolipoprotein diacylglyceryl transferase.